The following is a 69-amino-acid chain: Sperm protamine P1 (69 aa).

The disordered stretch occupies residues 1-69 (MASYRNSRSR…RKRNNNTENK (69 aa)). Basic residues-rich tracts occupy residues 7-25 (SRSR…RSRV) and 34-63 (RSSR…RKRN).

This sequence belongs to the protamine P1 family. As to expression, testis.

The protein localises to the nucleus. It is found in the chromosome. Protamines substitute for histones in the chromatin of sperm during the haploid phase of spermatogenesis. They compact sperm DNA into a highly condensed, stable and inactive complex. The sequence is that of Sperm protamine P1 (PRM1) from Perameles gunnii (Eastern barred bandicoot).